We begin with the raw amino-acid sequence, 293 residues long: Glycine--tRNA ligase alpha subunit (293 aa).

Belongs to the class-II aminoacyl-tRNA synthetase family. As to quaternary structure, tetramer of two alpha and two beta subunits.

The protein resides in the cytoplasm. It carries out the reaction tRNA(Gly) + glycine + ATP = glycyl-tRNA(Gly) + AMP + diphosphate. The chain is Glycine--tRNA ligase alpha subunit from Picosynechococcus sp. (strain ATCC 27264 / PCC 7002 / PR-6) (Agmenellum quadruplicatum).